We begin with the raw amino-acid sequence, 130 residues long: Ribonuclease P protein component (130 aa).

This sequence belongs to the RnpA family. Consists of a catalytic RNA component (M1 or rnpB) and a protein subunit.

The catalysed reaction is Endonucleolytic cleavage of RNA, removing 5'-extranucleotides from tRNA precursor.. RNaseP catalyzes the removal of the 5'-leader sequence from pre-tRNA to produce the mature 5'-terminus. It can also cleave other RNA substrates such as 4.5S RNA. The protein component plays an auxiliary but essential role in vivo by binding to the 5'-leader sequence and broadening the substrate specificity of the ribozyme. In Azotobacter vinelandii (strain DJ / ATCC BAA-1303), this protein is Ribonuclease P protein component.